A 602-amino-acid polypeptide reads, in one-letter code: Elongation factor 4 (602 aa).

Positions 8 to 189 (KNIRNFSIIA…KIITTIPAPS (182 aa)) constitute a tr-type G domain. GTP contacts are provided by residues 20–25 (DHGKST) and 136–139 (NKID).

It belongs to the TRAFAC class translation factor GTPase superfamily. Classic translation factor GTPase family. LepA subfamily.

Its subcellular location is the cell inner membrane. It catalyses the reaction GTP + H2O = GDP + phosphate + H(+). Its function is as follows. Required for accurate and efficient protein synthesis under certain stress conditions. May act as a fidelity factor of the translation reaction, by catalyzing a one-codon backward translocation of tRNAs on improperly translocated ribosomes. Back-translocation proceeds from a post-translocation (POST) complex to a pre-translocation (PRE) complex, thus giving elongation factor G a second chance to translocate the tRNAs correctly. Binds to ribosomes in a GTP-dependent manner. This Helicobacter pylori (strain G27) protein is Elongation factor 4.